The chain runs to 2563 residues: Compactin diketide synthase mlcB (2563 aa).

The region spanning 29–450 (STPIAIVGMG…GSNAHVILES (422 aa)) is the Ketosynthase family 3 (KS3) domain. Active-site for beta-ketoacyl synthase activity residues include Cys202, His337, and His372. The interval 568-915 (VFTGQGAQWH…TELISKGYGL (348 aa)) is acyl and malonyl transferase. Ser658 acts as the For malonyltransferase activity in catalysis. Over residues 951–960 (EPRGSRESKQ) the composition is skewed to basic and acidic residues. Positions 951 to 971 (EPRGSRESKQRTHPPHTLIGS) are disordered. An N-terminal hotdog fold region spans residues 966 to 1103 (HTLIGSRESL…GLIRSESERS (138 aa)). The PKS/mFAS DH domain maps to 966 to 1284 (HTLIGSRESL…FQSVGSSFSD (319 aa)). His998 functions as the Proton acceptor; for dehydratase activity in the catalytic mechanism. The dehydratase-like stretch occupies residues 998-1010 (HVVGSSIIFPGAG). The C-terminal hotdog fold stretch occupies residues 1121-1284 (DNRSIDPNDL…FQSVGSSFSD (164 aa)). The Proton donor; for dehydratase activity role is filled by Asp1187. Residues 1542–1579 (YDVVVACQVLHATRCMKRTLSNVRKLLKPGGNLILVET) form a methyltransferase region. Positions 2485–2562 (EAISIVLKAM…GLVELVVAKC (78 aa)) constitute a Carrier domain. Ser2522 is subject to O-(pantetheine 4'-phosphoryl)serine.

Pantetheine 4'-phosphate serves as cofactor.

The catalysed reaction is holo-[2-methylbutanoate polyketide synthase] + 2 malonyl-CoA + S-adenosyl-L-methionine + 2 NADPH + 3 H(+) = (S)-2-methylbutanoyl-[2-methylbutanoate polyketide synthase] + S-adenosyl-L-homocysteine + 2 CO2 + 2 NADP(+) + 2 CoA + H2O. It functions in the pathway polyketide biosynthesis. Diketide synthase; part of the gene cluster that mediates the biosynthesis of compactin, also known as mevastatin or ML-236B, and which acts as a potent competitive inhibitor of HMG-CoA reductase. Compactin biosynthesis is performed in two stages. The first stage is catalyzed by the nonaketide synthase mlcA, which belongs to type I polyketide synthases and catalyzes the iterative nine-step formation of the polyketide. This PKS stage is completed by the action of dehydrogenase mlcG, which catalyzes the NADPH-dependent reduction of the unsaturated tetra-, penta- and heptaketide intermediates that arise during the mlcA-mediated biosynthesis of the nonaketide chain and leads to dihydro-ML-236C carboxylate. Covalently bound dihydro-ML-236C carboxylate is released from mlcA by the mlcF esterase. Conversion of dihydro-ML-236C carboxylate into ML-236A carboxylate is subsequently performed with the participation of molecular oxygen and P450 monoogygenase mlcC. Finally, mlcH performs the conversion of ML-236A carboxylate to ML-236B/compactin carboxylate through the addition of the side-chain diketide moiety produced by the diketide synthase mlcB. This chain is Compactin diketide synthase mlcB (mlcB), found in Penicillium citrinum.